Consider the following 643-residue polypeptide: Galactan 5-O-arabinofuranosyltransferase (643 aa).

13 helical membrane-spanning segments follow: residues 25–45 (VLVA…VAVV), 66–86 (ALTT…GWLW), 97–117 (LGGL…PLGA), 180–200 (FKPW…VLWW), 205–225 (FEYA…YSSP), 229–249 (AAMI…GLGA), 255–272 (WAAV…ATWY), 276–293 (VAYG…LAGS), 309–329 (LAVV…PYLL), 355–375 (FPML…LWLV), 384–404 (AGAL…SMLA), 420–440 (LSVL…QALG), and 445–465 (GVIP…SQDI). Over 466-643 (PDVLRPDLTI…LAIRKPQESA (178 aa)) the chain is Extracellular.

This sequence belongs to the glycosyltransferase 85 family.

It localises to the cell membrane. The enzyme catalyses Adds an alpha-D-arabinofuranosyl group from trans,octacis-decaprenylphospho-beta-D-arabinofuranose at the 5-O-position of the eighth, tenth and twelfth galactofuranose unit of the galactofuranan chain of [beta-D-galactofuranosyl-(1-&gt;5)-beta-D-galactofuranosyl-(1-&gt;6)]14-beta-D-galactofuranosyl-(1-&gt;5)-beta-D-galactofuranosyl-(1-&gt;4)-alpha-L-rhamnopyranosyl-(1-&gt;3)-N-acetyl-alpha-D-glucosaminyl-diphospho-trans,octacis-decaprenol.. The protein operates within cell wall biogenesis; cell wall polysaccharide biosynthesis. Involved in the biosynthesis of the arabinogalactan (AG) region of the mycolylarabinogalactan-peptidoglycan (mAGP) complex, an essential component of the mycobacterial cell wall. Catalyzes the addition of the first key arabinofuranosyl (Araf) residue from the sugar donor decaprenyl-phospho-arabinose (DPA) on the C-5 of a 6-linked galactofuranosyl (Galf) of the galactan domain, thus 'priming' the galactan for further elaboration by other arabinofuranosyltransferases. It is not able to add an Araf residue to a terminal Galf. The chain is Galactan 5-O-arabinofuranosyltransferase from Mycobacterium tuberculosis (strain CDC 1551 / Oshkosh).